Consider the following 456-residue polypeptide: Hydroxyproline dehydrogenase (456 aa).

N6-acetyllysine is present on residues K310 and K320.

The protein belongs to the proline oxidase family. The cofactor is FAD.

It catalyses the reaction trans-4-hydroxy-L-proline + a quinone = (3R,5S)-1-pyrroline-3-hydroxy-5-carboxylate + a quinol + H(+). The enzyme catalyses L-proline + a quinone = (S)-1-pyrroline-5-carboxylate + a quinol + H(+). Dehydrogenase that converts trans-4-L-hydroxyproline to delta-1-pyrroline-3-hydroxy-5-carboxylate (Hyp) using ubiquinone-10 as the terminal electron acceptor. Can also use proline as a substrate but with a very much lower efficiency. Does not react with other diastereomers of Hyp: trans-4-D-hydroxyproline and cis-4-L-hydroxyproline. Ubiquininone analogs such as menadione, duroquinone and ubiquinone-1 react more efficiently than oxygen as the terminal electron acceptor during catalysis. The protein is Hydroxyproline dehydrogenase of Rattus norvegicus (Rat).